Here is a 144-residue protein sequence, read N- to C-terminus: Nucleoside diphosphate kinase (144 aa).

Residues K9, F57, R85, T91, R102, and N112 each coordinate ATP. The Pros-phosphohistidine intermediate role is filled by H115.

Belongs to the NDK family. Homotetramer. Requires Mg(2+) as cofactor.

It localises to the cytoplasm. The catalysed reaction is a 2'-deoxyribonucleoside 5'-diphosphate + ATP = a 2'-deoxyribonucleoside 5'-triphosphate + ADP. It catalyses the reaction a ribonucleoside 5'-diphosphate + ATP = a ribonucleoside 5'-triphosphate + ADP. Its function is as follows. Major role in the synthesis of nucleoside triphosphates other than ATP. The ATP gamma phosphate is transferred to the NDP beta phosphate via a ping-pong mechanism, using a phosphorylated active-site intermediate. This Chlamydia pneumoniae (Chlamydophila pneumoniae) protein is Nucleoside diphosphate kinase.